The following is a 1138-amino-acid chain: Condensin-2 complex subunit G2 (1138 aa).

Position 30 is a phosphoserine (Ser-30). Residues 459-497 form an HEAT repeat; that stretch reads LLPTLRYSLHDNSEKVRVAFVDLLLKIKAVRAAKFWKIC. Thr-1114 is modified (phosphothreonine).

As to quaternary structure, component of the condensin-2 complex, which contains the SMC2 and SMC4 heterodimer, and 3 non SMC subunits that probably regulate the complex: NCAPH2, NCAPD3 and NCAPG2. Expressed in spleen, lung and testis as well as in hematopoietic cell lines.

Its subcellular location is the nucleus. In terms of biological role, regulatory subunit of the condensin-2 complex, a complex which establishes mitotic chromosome architecture and is involved in physical rigidity of the chromatid axis. Is required for early embryonic development and is essential for viability and expansion of the inner cell mass (ICM) of the implanting blastocyst. The sequence is that of Condensin-2 complex subunit G2 (Ncapg2) from Mus musculus (Mouse).